The sequence spans 508 residues: ATP synthase subunit alpha (508 aa).

170–177 (GDRQTGKT) is a binding site for ATP.

The protein belongs to the ATPase alpha/beta chains family. F-type ATPases have 2 components, CF(1) - the catalytic core - and CF(0) - the membrane proton channel. CF(1) has five subunits: alpha(3), beta(3), gamma(1), delta(1), epsilon(1). CF(0) has three main subunits: a(1), b(2) and c(9-12). The alpha and beta chains form an alternating ring which encloses part of the gamma chain. CF(1) is attached to CF(0) by a central stalk formed by the gamma and epsilon chains, while a peripheral stalk is formed by the delta and b chains.

It is found in the cell inner membrane. It catalyses the reaction ATP + H2O + 4 H(+)(in) = ADP + phosphate + 5 H(+)(out). Produces ATP from ADP in the presence of a proton gradient across the membrane. The alpha chain is a regulatory subunit. This Dictyoglomus turgidum (strain DSM 6724 / Z-1310) protein is ATP synthase subunit alpha.